The chain runs to 79 residues: CDC42 small effector protein 1-A (79 aa).

Residues Cys10 and Cys11 are each lipidated (S-palmitoyl cysteine). One can recognise a CRIB domain in the interval 30 to 43 (IGEPMNFVHLTHVG).

Belongs to the CDC42SE/SPEC family.

It localises to the cytoplasm. Its subcellular location is the cytoskeleton. The protein localises to the cell membrane. Its function is as follows. Probably involved in the organization of the actin cytoskeleton by acting downstream of CDC42, inducing actin filament assembly. This Xenopus laevis (African clawed frog) protein is CDC42 small effector protein 1-A (cdc42se1-a).